A 290-amino-acid chain; its full sequence is Ribonuclease HIII (290 aa).

The 213-residue stretch at 78–290 (LPLIGTDEVG…FKNTEKAKNA (213 aa)) folds into the RNase H type-2 domain. A divalent metal cation contacts are provided by D84, E85, and D187.

Belongs to the RNase HII family. RnhC subfamily. Mn(2+) is required as a cofactor. It depends on Mg(2+) as a cofactor.

It is found in the cytoplasm. It carries out the reaction Endonucleolytic cleavage to 5'-phosphomonoester.. Its function is as follows. Endonuclease that specifically degrades the RNA of RNA-DNA hybrids. This Streptococcus pneumoniae serotype 2 (strain D39 / NCTC 7466) protein is Ribonuclease HIII.